A 286-amino-acid chain; its full sequence is E3 SUMO-protein ligase K-bZIP (286 aa).

Disordered stretches follow at residues 1-22 and 106-130; these read MPRM…EKDE and WTLS…SKRR.

Interacts with host HDAC1 and HDAC2, these interactions suppress HDAC activities. Interacts with protein ORF57. Interacts with protein vPK. In terms of processing, sumoylated.

The protein operates within protein modification; protein sumoylation. Functionally, SUMO E3 ligase that plays a role in viral gene regulation and is essential for viral reactivation. Disrupts host G1 cell cycle control thus allowing viral transcription and translation to proceed at the early stages of infection. Catalyzes its own SUMO modification as well as that of its interacting partners such as host TP53 and RB1. Regulates viral gene expression and reactivation and may mediate the SUMOylation of viral promoters in the low methylated 'Lys-9' histone H3 (H3K9me) region which results in a diminution of viral gene expression after reactivation. SUMOylates also host histone lysine demethylase 4A/KDM4A, an essential step for complete enrichment of SUMO-2/3 on the viral genome during viral transactivation and reactivation. This Human herpesvirus 8 type P (isolate GK18) (HHV-8) protein is E3 SUMO-protein ligase K-bZIP (K8).